A 116-amino-acid chain; its full sequence is MRHKHGYRKLGRTSSHRKALLKNLAIALIEHNKIETGIYKAKELRSYIEKLTTVARVGDFNAHRHVFAYLQNKEATHKLVTEIAPKYAQRNGGYTRIQRTTFRIGDASTLATIEFV.

It belongs to the bacterial ribosomal protein bL17 family. In terms of assembly, part of the 50S ribosomal subunit. Contacts protein L32.

In Helicobacter acinonychis (strain Sheeba), this protein is Large ribosomal subunit protein bL17.